The chain runs to 287 residues: Casein kinase II subunit beta-1 (287 aa).

The tract at residues 1–97 is disordered; sequence MYRDRGTVNS…ESDVSGSDGE (97 aa). Residues 13-25 show a composition bias toward basic and acidic residues; that stretch reads EVVDRKRINDALE. Residues 41–50 show a composition bias toward low complexity; the sequence is GTVTAATTTA. A compositionally biased stretch (acidic residues) spans 78 to 97; it reads SDDESDTDSEESDVSGSDGE.

This sequence belongs to the casein kinase 2 subunit beta family. In terms of assembly, heterotetramer of two catalytic alpha subunits and two regulatory beta subunits. Interacts with CCA1. Interacts with LHY. In terms of processing, phosphorylated by alpha subunit.

It is found in the cytoplasm. The protein resides in the cytosol. The protein localises to the nucleus. In terms of biological role, plays a complex role in regulating the basal catalytic activity of the alpha subunit. The tetrameric holoenzyme CK2, composed of two alpha and two beta subunits, phosphorylates the transcription factor GBFl, resulting in stimulation of its DNA binding activity. CK2 phosphorylates the transcription factor PIF1 after an exposure to light, resulting in a proteasome-dependent degradation of PIF1 and promotion of photomorphogenesis. CK2 phosphorylates translation initiation factors. May participate in the regulation of the initiation of translation. Stimulates the binding of CCA1 to promoters. The protein is Casein kinase II subunit beta-1 (CKB1) of Arabidopsis thaliana (Mouse-ear cress).